Reading from the N-terminus, the 418-residue chain is Tyrosine--tRNA ligase (418 aa).

L-tyrosine is bound at residue Y34. The 'HIGH' region motif lies at 39–48 (PTADSLHLGH). 2 residues coordinate L-tyrosine: Y169 and Q173. The 'KMSKS' region motif lies at 229 to 233 (KFGKS). K232 is an ATP binding site. The 67-residue stretch at 352–418 (HNIVELLVTA…GKKKYFVLTY (67 aa)) folds into the S4 RNA-binding domain.

The protein belongs to the class-I aminoacyl-tRNA synthetase family. TyrS type 1 subfamily. As to quaternary structure, homodimer.

The protein resides in the cytoplasm. It catalyses the reaction tRNA(Tyr) + L-tyrosine + ATP = L-tyrosyl-tRNA(Tyr) + AMP + diphosphate + H(+). Catalyzes the attachment of tyrosine to tRNA(Tyr) in a two-step reaction: tyrosine is first activated by ATP to form Tyr-AMP and then transferred to the acceptor end of tRNA(Tyr). This Streptococcus mutans serotype c (strain ATCC 700610 / UA159) protein is Tyrosine--tRNA ligase.